We begin with the raw amino-acid sequence, 287 residues long: MKIKKAIIPAAGLGTRFLPATKAMPKEMLPILDKPTIQYIVEEAVAAGIEDIIIVTGKHKRAIEDHFDNQKELEMILEEKGKSDLLQSVKYSSNLANMFYVRQKEQKGLGHAIWTARQFIGNEPFAVLLGDDIVQADTPAIKQLMNQYETTGKSIIGVQQVNEIETHRYGIVDPEESYNELFSVNKFVEKPEIGTAPSNLAIMGRYVLKPDIFDYLERQEIGRGGEIQLTDAIEHLNSEDCVYAYNFEGERYDVGEKIGFVKTTIQFALKDDYMKKEITEFIKSINK.

It belongs to the UDPGP type 2 family.

It catalyses the reaction alpha-D-glucose 1-phosphate + UTP + H(+) = UDP-alpha-D-glucose + diphosphate. It functions in the pathway glycolipid metabolism; diglucosyl-diacylglycerol biosynthesis. In terms of biological role, catalyzes the formation of UDP-glucose from glucose-1-phosphate and UTP. This is an intermediate step in the biosynthesis of diglucosyl-diacylglycerol (Glc2-DAG), i.e. a glycolipid found in the membrane, which is also used as a membrane anchor for lipoteichoic acid (LTA). This chain is UTP--glucose-1-phosphate uridylyltransferase 1 (gtaB1), found in Staphylococcus saprophyticus subsp. saprophyticus (strain ATCC 15305 / DSM 20229 / NCIMB 8711 / NCTC 7292 / S-41).